Consider the following 130-residue polypeptide: Acidic phospholipase A2 daboiatoxin B chain (130 aa).

Residues 1 to 8 form the signal peptide; the sequence is MCLIGVEG. Intrachain disulfides connect C34–C123, C36–C52, C51–C103, C57–C130, C58–C96, C65–C89, and C83–C94. 3 residues coordinate Ca(2+): Y35, G37, and G39. The active site involves H55. D56 is a Ca(2+) binding site. D97 is an active-site residue.

The protein belongs to the phospholipase A2 family. Group II subfamily. D49 sub-subfamily. Heterodimer of an acidic protein having phospholipase A2 activity (B chain) and an A chain which weakly inhibits the B chain enzymatic activity but potentiates its lethal potency. Ca(2+) serves as cofactor. In terms of tissue distribution, expressed by the venom gland.

Its subcellular location is the secreted. The catalysed reaction is a 1,2-diacyl-sn-glycero-3-phosphocholine + H2O = a 1-acyl-sn-glycero-3-phosphocholine + a fatty acid + H(+). Monomer: Snake venom phospholipase A2 (PLA2) that shows a high PLA2 activity (2110 umol/min/mg). In terms of biological role, heterodimer (A and B chains): snake venom phospholipase A2 that shows a moderate PLA2 activity (1377 umol/min/mg). Acts as a presynaptic neurotoxin. In vivo, induces edema and produces neurotoxic symptoms in mice. It exhibits indirect hemolysis and a strong myonecrotic activity and is cytotoxic. PLA2 catalyzes the calcium-dependent hydrolysis of the 2-acyl groups in 3-sn-phosphoglycerides. This Daboia siamensis (Eastern Russel's viper) protein is Acidic phospholipase A2 daboiatoxin B chain.